Reading from the N-terminus, the 450-residue chain is Immunoglobulin G-binding protein A (450 aa).

The first 36 residues, 1 to 36 (MKKKNIYSIRKLGVGIASVTLGTLLISGGVTPAANA), serve as a signal peptide directing secretion. Positions 7–18 (YSIRKLGVGIAS) match the YSIRK-G/S signaling motif motif. One copy of the Immunoglobulin-binding region E repeat lies at 37 to 92 (AQHDEAQQNAFYQVLNMPNLNADQRNGFIQSLKDDPSQSANVLGEAQKLNDSQAPK). An Immunoglobulin-binding region D repeat occupies 93–153 (ADAQQNNFNK…KKLNESQAPK (61 aa)). The Immunoglobulin-binding region A repeat unit spans residues 154 to 211 (ADNNFNKEQQNAFYEILNMPNLNEEQRNGFIQSLKDDPSQSANLLSEAKKLNESQAPK). One copy of the Immunoglobulin-binding region B/C repeat lies at 212–269 (ADNKFNKEQQNAFYEILHLPNLNEEQRNGFIQSLKDDPSVSKEILAEAKKLNDAQAPK). Residues 260–354 (KKLNDAQAPK…GNKPGKEDGN (95 aa)) are compositionally biased toward basic and acidic residues. Disordered stretches follow at residues 260-365 (KKLN…GDTV) and 401-421 (KKQPANHADANKAQALPETGE). 11 consecutive repeat copies span residues 268 to 275 (PKEEDNKK), 276 to 283 (PGKEDGNK), 284 to 291 (PGKEDGNK), 292 to 299 (PGKEDNKK), 300 to 307 (PGKEDGNK), 308 to 315 (PGKEDNNK), 316 to 323 (PGKEDGNK), 324 to 331 (PGKEDNNK), 332 to 339 (PGKEDGNK), 340 to 347 (PGKEDGNK), and 348 to 355 (PGKEDGNG). Positions 268 to 355 (PKEEDNKKPG…NKPGKEDGNG (88 aa)) are 12 X 8 AA approximate tandem repeats. Residues 355–399 (GVHVVKPGDTVNDIAKANGTTADKIAADNKLADKNMIKPGQELVV) enclose the LysM domain. Residues 416–420 (LPETG) carry the LPXTG sorting signal motif. Residue threonine 419 is modified to Pentaglycyl murein peptidoglycan amidated threonine. The propeptide at 420–450 (GEENPFIGTTVFGGLSLALGAALLAGRRREL) is removed by sortase.

Belongs to the immunoglobulin-binding protein SpA family. In terms of assembly, interacts with host TNFRSF1A; this interaction leads to the stimulation of both surface expression and shedding of TNFRSF1A.

Its subcellular location is the secreted. It is found in the cell wall. Plays a role in the inhibition of the host innate and adaptive immune responses. Possesses five immunoglobulin-binding domains that capture both the fragment crystallizable region (Fc region) and the Fab region (part of Ig that identifies antigen) of immunoglobulins. In turn, Staphylococcus aureus is protected from phagocytic killing via inhibition of Ig Fc region. In addition, the host elicited B-cell response is prevented due to a decrease of antibody-secreting cell proliferation that enter the bone marrow, thereby decreasing long-term antibody production. Inhibits osteogenesis by preventing osteoblast proliferation and expression of alkaline phosphatase, type I collagen, osteopontin and osteocalcin. Acts directly as a pro-inflammatory factor in the lung through its ability to bind and activate tumor necrosis factor alpha receptor 1/TNFRSF1A. The polypeptide is Immunoglobulin G-binding protein A (spa) (Staphylococcus aureus (strain Mu50 / ATCC 700699)).